The following is a 437-amino-acid chain: Glutamyl-tRNA reductase (437 aa).

Residues 49–52, Ser-109, 114–116, and Gln-120 each bind substrate; these read TCNR and ETQ. Catalysis depends on Cys-50, which acts as the Nucleophile. 189–194 provides a ligand contact to NADP(+); that stretch reads GAGKMS.

The protein belongs to the glutamyl-tRNA reductase family. In terms of assembly, homodimer.

It catalyses the reaction (S)-4-amino-5-oxopentanoate + tRNA(Glu) + NADP(+) = L-glutamyl-tRNA(Glu) + NADPH + H(+). It functions in the pathway porphyrin-containing compound metabolism; protoporphyrin-IX biosynthesis; 5-aminolevulinate from L-glutamyl-tRNA(Glu): step 1/2. Functionally, catalyzes the NADPH-dependent reduction of glutamyl-tRNA(Glu) to glutamate 1-semialdehyde (GSA). The chain is Glutamyl-tRNA reductase from Paenibacillus macerans (Bacillus macerans).